We begin with the raw amino-acid sequence, 446 residues long: Transcription factor Dp-2 (446 aa).

Thr-2 carries the N-acetylthreonine modification. 2 positions are modified to phosphoserine; by CDK2: Ser-24 and Ser-42. The interaction with CEBPA stretch occupies residues 60–82 (PQMIISTPQRIANSGSVLIGNPY). Residues 103–118 (SDRKRAREFIDSDFSE) carry the Nuclear localization signal motif. Ser-122 carries the post-translational modification Phosphoserine. The DNA-binding element occupies 129 to 210 (GKGLRHFSMK…PTGKKRNQVD (82 aa)). The DEF box signature appears at 176–210 (DQENIRRRVYDALNVLMAMNIISSLPTGKKRNQVD). The interval 219–292 (NLEIEKQRRI…RKTVIDCSIS (74 aa)) is dimerization. The DCB1 stretch occupies residues 229 to 261 (ERIKQKRAQLQELLLQQIAFKNLVQRNRQNEQQ). The DCB2 stretch occupies residues 274–330 (LPFIIINTSRKTVIDCSISSDKFEYLFNFDNTFEIHDDIEVLKRMGMSFGLESGKCS). The disordered stretch occupies residues 404–446 (LPASNSHQSSSAASHFSESRGETPCSFNDEDEEDEEEDPSSPE). A compositionally biased stretch (low complexity) spans 406 to 419 (ASNSHQSSSAASHF). The span at 431–446 (NDEDEEDEEEDPSSPE) shows a compositional bias: acidic residues.

The protein belongs to the E2F/DP family. As to quaternary structure, component of the DRTF1/E2F transcription factor complex. Forms heterodimers with E2F family members. The complex can interact with hypophosphorylated retinoblastoma protein RB1 and related proteins (RBL1 and RBL2) that inhibit the E2F transactivation domain. During the cell cycle, RB becomes phosphorylated in mid-to-late G1 phase, detaches from the DRTF1/E2F complex rendering E2F transcriptionally active. Interacts with GMCL. Component of the DREAM complex (also named LINC complex) at least composed of E2F4, E2F5, LIN9, LIN37, LIN52, LIN54, MYBL1, MYBL2, RBL1, RBL2, RBBP4, TFDP1 and TFDP2. The complex exists in quiescent cells where it represses cell cycle-dependent genes. It dissociates in S phase when LIN9, LIN37, LIN52 and LIN54 form a subcomplex that binds to MYBL2. The complex TFDP2:E2F1 interacts with CEBPA; the interaction prevents CEBPA binding to target gene promoters and represses its transcriptional activity. Phosphorylation by E2F1-bound cyclin A-CDK2, in the S phase, inhibits E2F-mediated DNA binding and transactivation. As to expression, expressed in all tissues examined. Highest levels in spleen and heart.

It is found in the nucleus. Can stimulate E2F-dependent transcription. Binds DNA cooperatively with E2F family members through the E2 recognition site, 5'-TTTC[CG]CGC-3', found in the promoter region of a number of genes whose products are involved in cell cycle regulation or in DNA replication. The TFDP2:E2F complex functions in the control of cell-cycle progression from G1 to S phase. The E2F1:DP complex appears to mediate both cell proliferation and apoptosis. Blocks adipocyte differentiation by repressing CEBPA binding to its target gene promoters. This chain is Transcription factor Dp-2 (Tfdp2), found in Mus musculus (Mouse).